We begin with the raw amino-acid sequence, 294 residues long: Ribosomal RNA small subunit methyltransferase H (294 aa).

Residues 31–33, Asp-49, Phe-76, Asp-97, and Gln-104 contribute to the S-adenosyl-L-methionine site; that span reads GGY.

This sequence belongs to the methyltransferase superfamily. RsmH family.

It is found in the cytoplasm. The catalysed reaction is cytidine(1402) in 16S rRNA + S-adenosyl-L-methionine = N(4)-methylcytidine(1402) in 16S rRNA + S-adenosyl-L-homocysteine + H(+). Specifically methylates the N4 position of cytidine in position 1402 (C1402) of 16S rRNA. The protein is Ribosomal RNA small subunit methyltransferase H of Wolbachia pipientis subsp. Culex pipiens (strain wPip).